Here is a 272-residue protein sequence, read N- to C-terminus: Eukaryotic translation initiation factor 4E homolog (272 aa).

Residues 249–272 (GKLNSGRKPSNTRGGFSSFGNKRY) form a disordered region. Residues 255–272 (RKPSNTRGGFSSFGNKRY) are compositionally biased toward polar residues.

Belongs to the eukaryotic initiation factor 4E family.

Functionally, recognizes and binds the 7-methylguanosine-containing mRNA cap during an early step in the initiation of protein synthesis and facilitates ribosome binding by inducing the unwinding of the mRNAs secondary structures. This chain is Eukaryotic translation initiation factor 4E homolog, found in Acanthamoeba polyphaga mimivirus (APMV).